An 832-amino-acid chain; its full sequence is Mucosa-associated lymphoid tissue lymphoma translocation protein 1 homolog (832 aa).

The disordered stretch occupies residues 1–39; that stretch reads MSLWGQPLQASPPLAVRQPPTASSGPSTSPPAGATLNRL. Residue Ser2 is modified to N-acetylserine. The span at 19–39 shows a compositional bias: low complexity; the sequence is PPTASSGPSTSPPAGATLNRL. One can recognise a Death domain in the interval 45 to 132; sequence RRLSESLDRA…EVLPLLNPPG (88 aa). 2 Ig-like C2-type domains span residues 131 to 207 and 218 to 314; these read PGLK…FEFS and AEVT…KKAE. At Ser141 the chain carries Phosphoserine. 2 disulfides stabilise this stretch: Cys154/Cys196 and Cys257/Cys299. The tract at residues 356 to 570 is caspase-like; that stretch reads IGNMSYWEHP…SLSEKRALTD (215 aa). The short motif at 377–384 is the Nuclear export signal element; that stretch reads LTNLLRQL. Active-site residues include His423 and Cys472.

It belongs to the peptidase C14B family. In terms of assembly, homooligomer; forms oligomers which bind to TRAF6. Forms a complex with CARD14 and MALT1; resulting in the formation of a CBM (CARD14-BCL10-MALT1) complex. Forms a complex with CARD11 and MALT1; resulting in the formation of a CBM (CARD11-BCL10-MALT1) complex. Forms a complex with CARD9 and MALT1; resulting in the formation of a CBM (CARD9-BCL10-MALT1) complex.

It localises to the cytoplasm. The protein resides in the perinuclear region. It is found in the nucleus. Functionally, protease that enhances BCL10-induced activation: acts via formation of CBM complexes that channel adaptive and innate immune signaling downstream of CARD domain-containing proteins (CARD9, CARD11 and CARD14) to activate NF-kappa-B and MAP kinase p38 pathways which stimulate expression of genes encoding pro-inflammatory cytokines and chemokines. Mediates BCL10 cleavage: MALT1-dependent BCL10 cleavage plays an important role in T-cell antigen receptor-induced integrin adhesion. Involved in the induction of T helper 17 cells (Th17) differentiation. Cleaves RC3H1 and ZC3H12A in response to T-cell receptor (TCR) stimulation which releases their cooperatively repressed targets to promote Th17 cell differentiation. Also mediates cleavage of N4BP1 in T-cells following TCR-mediated activation, leading to N4BP1 inactivation. May also have ubiquitin ligase activity: binds to TRAF6, inducing TRAF6 oligomerization and activation of its ligase activity. The polypeptide is Mucosa-associated lymphoid tissue lymphoma translocation protein 1 homolog (Mus musculus (Mouse)).